The following is a 199-amino-acid chain: Pyridoxal 5'-phosphate synthase subunit PdxT (199 aa).

Position 47-49 (47-49 (GES)) interacts with L-glutamine. The Nucleophile role is filled by Cys79. Residues Arg106 and 133–134 (IR) each bind L-glutamine. Catalysis depends on charge relay system residues His169 and Glu171.

Belongs to the glutaminase PdxT/SNO family. In terms of assembly, in the presence of PdxS, forms a dodecamer of heterodimers. Only shows activity in the heterodimer.

It catalyses the reaction aldehydo-D-ribose 5-phosphate + D-glyceraldehyde 3-phosphate + L-glutamine = pyridoxal 5'-phosphate + L-glutamate + phosphate + 3 H2O + H(+). The enzyme catalyses L-glutamine + H2O = L-glutamate + NH4(+). It participates in cofactor biosynthesis; pyridoxal 5'-phosphate biosynthesis. In terms of biological role, catalyzes the hydrolysis of glutamine to glutamate and ammonia as part of the biosynthesis of pyridoxal 5'-phosphate. The resulting ammonia molecule is channeled to the active site of PdxS. This is Pyridoxal 5'-phosphate synthase subunit PdxT from Desulfitobacterium hafniense (strain Y51).